A 978-amino-acid chain; its full sequence is Xylanolytic transcriptional activator xlnR (978 aa).

Disordered stretches follow at residues 1–39 and 53–116; these read MSTT…LAEG and AAAG…RDPL. The segment covering 18–32 has biased composition (polar residues); sequence SGLSSNRMAQSQTPG. The segment covering 53–69 has biased composition (low complexity); it reads AAAGDTTATAASGPSDP. The span at 71 to 82 shows a compositional bias: basic and acidic residues; sequence SKSKDPYDFDHH. Residues 83–93 show a composition bias toward basic residues; sequence NHNHHNHHNNN. The span at 94-103 shows a compositional bias: low complexity; the sequence is HHPNSNSNNS. The zn(2)-C6 fungal-type DNA-binding region spans 140–166; that stretch reads CDQCNQLRTRCDGQNPCAHCIEFGLTC. Disordered regions lie at residues 179 to 223, 238 to 293, and 588 to 629; these read SKKD…ELNG, SAQP…PIPV, and ELPP…PGNT. A compositionally biased stretch (low complexity) spans 184 to 193; that stretch reads AAAAAAATAT. Residues 214 to 223 show a composition bias toward basic and acidic residues; that stretch reads PPDRRQELNG.

Belongs to the xlnR/xlr1 family.

It localises to the nucleus. Functionally, transcriptional activator of the xylanolytic system. Involved in the regulation of extracellular cellulolytic and xylanolytic genes and in the regulation of the intracellular activities of D-xylose catabolic genes in the pentose catabolic pathway (PCP) in response to the presence of D-xylose. The protein is Xylanolytic transcriptional activator xlnR (xlnR) of Aspergillus clavatus (strain ATCC 1007 / CBS 513.65 / DSM 816 / NCTC 3887 / NRRL 1 / QM 1276 / 107).